The chain runs to 160 residues: Protein Bel-3 (160 aa).

As to quaternary structure, homodimer.

The protein resides in the host cytoplasm. In Human spumaretrovirus (SFVcpz(hu)), this protein is Protein Bel-3 (bel3).